A 295-amino-acid chain; its full sequence is Undecaprenyl-diphosphatase (295 aa).

7 helical membrane-spanning segments follow: residues 12–34 (IAIA…HAVV), 50–70 (FLPF…LYFW), 95–115 (IFML…LLEH), 120–140 (LFES…LLLF), 209–229 (AHFS…LEVP), 243–263 (TAAL…AFLM), and 272–292 (WALK…LAWL).

The protein belongs to the UppP family.

It is found in the cell inner membrane. It catalyses the reaction di-trans,octa-cis-undecaprenyl diphosphate + H2O = di-trans,octa-cis-undecaprenyl phosphate + phosphate + H(+). In terms of biological role, catalyzes the dephosphorylation of undecaprenyl diphosphate (UPP). Confers resistance to bacitracin. This is Undecaprenyl-diphosphatase from Granulibacter bethesdensis (strain ATCC BAA-1260 / CGDNIH1).